A 1253-amino-acid polypeptide reads, in one-letter code: Cytoplasmic FMR1-interacting protein 1 (1253 aa).

Serine 583 bears the Phosphoserine mark. At threonine 1234 the chain carries Phosphothreonine.

It belongs to the CYFIP family. As to quaternary structure, component of the WAVE1 complex composed of ABI2, CYFIP1 or CYFIP2, BRK1, NCKAP1 and WASF1/WAVE1. Within the complex, a heterodimer containing NCKAP1 and CYFIP1 interacts with a heterotrimer formed by WAVE1, ABI2 and BRK1. Component of the CYFIP1-EIF4E-FMR1 complex which is composed of CYFIP, EIF4E and FMR1. Interacts with FMR1 but does not bind to related proteins FXR1 or FXR2. Interaction with EIF4E stimulates FMR1 binding. Component of the WAVE2 complex composed of ABI1, CYFIP1/SRA1, NCKAP1/NAP1 (NCKAP1l/HEM1 in hematopoietic cells) and WASF2/WAVE2. Interacts with the active GTP-bound form of RAC1. Interacts through its C-terminus with the C-terminus of DPYSL2/CRMP2 which is necessary for DPYSL2-induced axon outgrowth. Interacts with NYAP1, NYAP2 and MYO16. Interacts with TMEM108 (via N-terminus); the interaction associates TMEM108 with the WAVE1 complex.

It is found in the cytoplasm. It localises to the perinuclear region. Its subcellular location is the cell projection. The protein localises to the lamellipodium. The protein resides in the ruffle. It is found in the synapse. It localises to the synaptosome. Functionally, component of the CYFIP1-EIF4E-FMR1 complex which binds to the mRNA cap and mediates translational repression. In the CYFIP1-EIF4E-FMR1 complex this subunit is an adapter between EIF4E and FMR1. Promotes the translation repression activity of FMR1 in brain probably by mediating its association with EIF4E and mRNA. Regulates formation of membrane ruffles and lamellipodia. Plays a role in axon outgrowth. Binds to F-actin but not to RNA. Part of the WAVE complex that regulates actin filament reorganization via its interaction with the Arp2/3 complex. Actin remodeling activity is regulated by RAC1. Regulator of epithelial morphogenesis. As component of the WAVE1 complex, required for BDNF-NTRK2 endocytic trafficking and signaling from early endosomes. May act as an invasion suppressor in cancers. The sequence is that of Cytoplasmic FMR1-interacting protein 1 from Homo sapiens (Human).